Here is a 292-residue protein sequence, read N- to C-terminus: Acidic endochitinase (292 aa).

Residues 1-25 form the signal peptide; the sequence is MAAHKITTTLSIFFLLSSIFRSSDA. One can recognise a GH18 domain in the interval 26–292; the sequence is AGIAIYWGQN…YSDSIKGSIG (267 aa). Intrachain disulfides connect Cys45/Cys92 and Cys75/Cys82. Glu152 (proton donor) is an active-site residue. Cys180 and Cys209 are joined by a disulfide.

Belongs to the glycosyl hydrolase 18 family. Chitinase class II subfamily.

The protein localises to the secreted. It is found in the extracellular space. It catalyses the reaction Random endo-hydrolysis of N-acetyl-beta-D-glucosaminide (1-&gt;4)-beta-linkages in chitin and chitodextrins.. Functionally, this protein functions as a defense against chitin containing fungal pathogens. The protein is Acidic endochitinase of Cucumis sativus (Cucumber).